The following is a 114-amino-acid chain: Hydrogenase maturation factor HypA (114 aa).

His-2 contacts Ni(2+). The Zn(2+) site is built by Cys-73, Cys-76, Cys-89, and Cys-92.

This sequence belongs to the HypA/HybF family.

In terms of biological role, involved in the maturation of [NiFe] hydrogenases. Required for nickel insertion into the metal center of the hydrogenase. This chain is Hydrogenase maturation factor HypA, found in Syntrophus aciditrophicus (strain SB).